The chain runs to 310 residues: B3 domain-containing transcription factor NGA1 (310 aa).

Positions Met1–Arg26 are disordered. Over residues Ala16–Arg26 the composition is skewed to basic and acidic residues. Positions Phe35–Pro141 form a DNA-binding region, TF-B3. Over residues Glu251 to Ser268 the composition is skewed to low complexity. Residues Glu251 to Gln310 form a disordered region.

As to quaternary structure, interacts with BRX. Interacts with BZIP30.

Its subcellular location is the nucleus. In terms of biological role, regulates lateral organ growth. Functionally redundant with NGA2, NGA3 and NGA4. This is B3 domain-containing transcription factor NGA1 (NGA1) from Arabidopsis thaliana (Mouse-ear cress).